A 401-amino-acid polypeptide reads, in one-letter code: Dual specificity mitogen-activated protein kinase kinase 2 (401 aa).

Met-1 carries the post-translational modification N-acetylmethionine. Residue Ser-23 is modified to Phosphoserine. Residues Phe-72–Ile-370 form the Protein kinase domain. Residues Leu-78 to Val-86 and Lys-101 contribute to the ATP site. Residue Asp-194 is the Proton acceptor of the active site. Phosphoserine; by RAF occurs at positions 222 and 226. The interval Pro-282–Gly-310 is disordered. Ser-293, Ser-295, and Ser-306 each carry phosphoserine. 2 positions are modified to phosphothreonine: Thr-395 and Thr-397.

Belongs to the protein kinase superfamily. STE Ser/Thr protein kinase family. MAP kinase kinase subfamily. In terms of assembly, interacts with MORG1. Interacts with SGK1. Interacts with KSR1. Interacts with KSR1 and BRAF; the interaction with KSR1 mediates KSR1-BRAF dimerization. Interacts with GLS. Requires Mg(2+) as cofactor. Phosphorylation on Ser/Thr by MAP kinase kinase kinases (RAF or MEKK1) positively regulates the kinase activity. Phosphorylated by MAP2K1/MEK1. Low levels of autophosphorylation have been observed. As to expression, expressed in adult intestine, kidney, liver, lung, pancreas, spleen, thymus, and at high levels in the neonatal brain. Lower expression is found in adult brain and heart.

It localises to the cytoplasm. It is found in the membrane. It carries out the reaction L-seryl-[protein] + ATP = O-phospho-L-seryl-[protein] + ADP + H(+). The catalysed reaction is L-threonyl-[protein] + ATP = O-phospho-L-threonyl-[protein] + ADP + H(+). The enzyme catalyses L-tyrosyl-[protein] + ATP = O-phospho-L-tyrosyl-[protein] + ADP + H(+). Its activity is regulated as follows. Inhibited by serine/threonine phosphatase 2A. Catalyzes the concomitant phosphorylation of a threonine and a tyrosine residue in a Thr-Glu-Tyr sequence located in MAP kinases. Activates the ERK1 and ERK2 MAP kinases. Activates BRAF in a KSR1 or KSR2-dependent manner; by binding to KSR1 or KSR2 releases the inhibitory intramolecular interaction between KSR1 or KSR2 protein kinase and N-terminal domains which promotes KSR1 or KSR2-BRAF dimerization and BRAF activation. This Mus musculus (Mouse) protein is Dual specificity mitogen-activated protein kinase kinase 2 (Map2k2).